A 252-amino-acid chain; its full sequence is MKKTKTMVASISTLIRRTYPSTNQCNSLATIQSQTQLPRESLQHHSSAEGRLRFSGRVFCSESGAGCWNCGEKAAFLFCNSCRSIQPVDDSVDYFQIFGLEKKYEIDPGSLEGKYKDWQKKLHPDLVHNKSKKERDYAAEQSAKVTEACRTLTKRLSRAMYIMKLNGVNVNEEETITDPTLLMEIMELREAISEADDSTSLNQIRSQVQEKLKQWSDSFVEAFESQKFDDAVKCIQRMTYYERACEEILKKL.

The N-terminal 59 residues, 1 to 59 (MKKTKTMVASISTLIRRTYPSTNQCNSLATIQSQTQLPRESLQHHSSAEGRLRFSGRVF), are a transit peptide targeting the mitochondrion. The J domain occupies 93-165 (DYFQIFGLEK…LSRAMYIMKL (73 aa)).

The protein belongs to the HscB family. As to quaternary structure, interacts with ISU1 and HSP70-9/HSCA1.

It localises to the mitochondrion. Its subcellular location is the cytoplasm. The protein localises to the cytosol. Its function is as follows. Co-chaperone required for the assembly of iron-sulfur [Fe-S] clusters in both mitochondria and cytosol. Required for the activity of iron-sulfur proteins such as aconitase and succinate dehydrogenase. Involved in iron homeostasis and may take part in the control of iron translocation from roots to shoots. The sequence is that of Iron-sulfur cluster co-chaperone protein HscB homolog from Arabidopsis thaliana (Mouse-ear cress).